We begin with the raw amino-acid sequence, 44 residues long: Cytochrome b559 subunit beta (44 aa).

The chain crosses the membrane as a helical span at residues 19-35 (WVSIHALAVPTIFFLGS). A heme-binding site is contributed by histidine 23.

Belongs to the PsbE/PsbF family. Heterodimer of an alpha subunit and a beta subunit. PSII is composed of 1 copy each of membrane proteins PsbA, PsbB, PsbC, PsbD, PsbE, PsbF, PsbH, PsbI, PsbJ, PsbK, PsbL, PsbM, PsbT, PsbX, PsbY, PsbZ, Psb30/Ycf12, at least 3 peripheral proteins of the oxygen-evolving complex and a large number of cofactors. It forms dimeric complexes. Heme b is required as a cofactor.

The protein resides in the plastid. It localises to the chloroplast thylakoid membrane. Functionally, this b-type cytochrome is tightly associated with the reaction center of photosystem II (PSII). PSII is a light-driven water:plastoquinone oxidoreductase that uses light energy to abstract electrons from H(2)O, generating O(2) and a proton gradient subsequently used for ATP formation. It consists of a core antenna complex that captures photons, and an electron transfer chain that converts photonic excitation into a charge separation. The sequence is that of Cytochrome b559 subunit beta from Chlamydomonas moewusii (Chlamydomonas eugametos).